The primary structure comprises 348 residues: Protein RecA (348 aa).

67–74 (GPESSGKT) lines the ATP pocket.

This sequence belongs to the RecA family.

The protein resides in the cytoplasm. In terms of biological role, can catalyze the hydrolysis of ATP in the presence of single-stranded DNA, the ATP-dependent uptake of single-stranded DNA by duplex DNA, and the ATP-dependent hybridization of homologous single-stranded DNAs. It interacts with LexA causing its activation and leading to its autocatalytic cleavage. The polypeptide is Protein RecA (Kineococcus radiotolerans (strain ATCC BAA-149 / DSM 14245 / SRS30216)).